The chain runs to 251 residues: Demethylmenaquinone methyltransferase (251 aa).

S-adenosyl-L-methionine contacts are provided by residues Thr66, Asp87, and Asn115–Ala116.

Belongs to the class I-like SAM-binding methyltransferase superfamily. MenG/UbiE family.

The catalysed reaction is a 2-demethylmenaquinol + S-adenosyl-L-methionine = a menaquinol + S-adenosyl-L-homocysteine + H(+). It functions in the pathway quinol/quinone metabolism; menaquinone biosynthesis; menaquinol from 1,4-dihydroxy-2-naphthoate: step 2/2. Methyltransferase required for the conversion of demethylmenaquinol (DMKH2) to menaquinol (MKH2). This Symbiobacterium thermophilum (strain DSM 24528 / JCM 14929 / IAM 14863 / T) protein is Demethylmenaquinone methyltransferase.